Consider the following 417-residue polypeptide: Imidazolonepropionase (417 aa).

His80 and His82 together coordinate Fe(3+). Zn(2+) contacts are provided by His80 and His82. Residues Arg89, Tyr152, and His187 each contribute to the 4-imidazolone-5-propanoate site. An N-formimidoyl-L-glutamate-binding site is contributed by Tyr152. His252 provides a ligand contact to Fe(3+). His252 lines the Zn(2+) pocket. A 4-imidazolone-5-propanoate-binding site is contributed by Glu255. Asp326 contributes to the Fe(3+) binding site. Asp326 lines the Zn(2+) pocket. N-formimidoyl-L-glutamate-binding residues include Asn328 and Gly330. Residue Ser331 participates in 4-imidazolone-5-propanoate binding.

Belongs to the metallo-dependent hydrolases superfamily. HutI family. Zn(2+) is required as a cofactor. The cofactor is Fe(3+).

It is found in the cytoplasm. It carries out the reaction 4-imidazolone-5-propanoate + H2O = N-formimidoyl-L-glutamate. Its pathway is amino-acid degradation; L-histidine degradation into L-glutamate; N-formimidoyl-L-glutamate from L-histidine: step 3/3. Its function is as follows. Catalyzes the hydrolytic cleavage of the carbon-nitrogen bond in imidazolone-5-propanoate to yield N-formimidoyl-L-glutamate. It is the third step in the universal histidine degradation pathway. The protein is Imidazolonepropionase of Bacteroides fragilis (strain ATCC 25285 / DSM 2151 / CCUG 4856 / JCM 11019 / LMG 10263 / NCTC 9343 / Onslow / VPI 2553 / EN-2).